Here is a 706-residue protein sequence, read N- to C-terminus: Elongation factor G (706 aa).

One can recognise a tr-type G domain in the interval 8–297; sequence ERVRNIGIAA…AVIDYLPAPT (290 aa). GTP contacts are provided by residues 17–24, 96–100, and 150–153; these read AHIDAGKT, DTPGH, and NKMD.

Belongs to the TRAFAC class translation factor GTPase superfamily. Classic translation factor GTPase family. EF-G/EF-2 subfamily.

The protein resides in the cytoplasm. In terms of biological role, catalyzes the GTP-dependent ribosomal translocation step during translation elongation. During this step, the ribosome changes from the pre-translocational (PRE) to the post-translocational (POST) state as the newly formed A-site-bound peptidyl-tRNA and P-site-bound deacylated tRNA move to the P and E sites, respectively. Catalyzes the coordinated movement of the two tRNA molecules, the mRNA and conformational changes in the ribosome. This chain is Elongation factor G, found in Cyanothece sp. (strain PCC 7425 / ATCC 29141).